Consider the following 198-residue polypeptide: Nucleoid occlusion factor SlmA (198 aa).

The HTH tetR-type domain maps to 11–71 (PNRKHQILES…GLIDFIEESI (61 aa)). A DNA-binding region (H-T-H motif) is located at residues 34–53 (TTAKLAAEVGFSEAALYRHF).

This sequence belongs to the nucleoid occlusion factor SlmA family. In terms of assembly, homodimer. Interacts with FtsZ.

It localises to the cytoplasm. It is found in the nucleoid. In terms of biological role, required for nucleoid occlusion (NO) phenomenon, which prevents Z-ring formation and cell division over the nucleoid. Acts as a DNA-associated cell division inhibitor that binds simultaneously chromosomal DNA and FtsZ, and disrupts the assembly of FtsZ polymers. SlmA-DNA-binding sequences (SBS) are dispersed on non-Ter regions of the chromosome, preventing FtsZ polymerization at these regions. The sequence is that of Nucleoid occlusion factor SlmA from Colwellia psychrerythraea (strain 34H / ATCC BAA-681) (Vibrio psychroerythus).